The primary structure comprises 310 residues: Protein translocase subunit SecF (310 aa).

6 consecutive transmembrane segments (helical) span residues 18–38 (FFTISGLLLLLTVGAFIYRGG), 135–155 (QAVYAFLFAFLVMIVYVAFRF), 162–182 (IVSVVGIIHDIVISLGFVILA), 188–208 (ITIVAALLTVVGYSINDTIVL), 240–260 (IVTSLTVFIVACSLFFFGGEV), and 267–287 (IMIIGTVLGVFSTIFVCAPLI).

The protein belongs to the SecD/SecF family. SecF subfamily. Forms a complex with SecD. Part of the essential Sec protein translocation apparatus which comprises SecA, SecYEG and auxiliary proteins SecDF. Other proteins may also be involved.

It localises to the cell inner membrane. Functionally, part of the Sec protein translocase complex. Interacts with the SecYEG preprotein conducting channel. SecDF uses the proton motive force (PMF) to complete protein translocation after the ATP-dependent function of SecA. In Endomicrobium trichonymphae, this protein is Protein translocase subunit SecF.